We begin with the raw amino-acid sequence, 506 residues long: Histidine ammonia-lyase (506 aa).

A cross-link (5-imidazolinone (Ala-Gly)) is located at residues 143-145 (ASG). Serine 144 is modified (2,3-didehydroalanine (Ser)).

The protein belongs to the PAL/histidase family. Post-translationally, contains an active site 4-methylidene-imidazol-5-one (MIO), which is formed autocatalytically by cyclization and dehydration of residues Ala-Ser-Gly.

It localises to the cytoplasm. The catalysed reaction is L-histidine = trans-urocanate + NH4(+). It participates in amino-acid degradation; L-histidine degradation into L-glutamate; N-formimidoyl-L-glutamate from L-histidine: step 1/3. This is Histidine ammonia-lyase from Salmonella choleraesuis (strain SC-B67).